Here is a 192-residue protein sequence, read N- to C-terminus: Elongation factor P (192 aa).

This sequence belongs to the elongation factor P family.

It localises to the cytoplasm. Its pathway is protein biosynthesis; polypeptide chain elongation. Its function is as follows. Involved in peptide bond synthesis. Stimulates efficient translation and peptide-bond synthesis on native or reconstituted 70S ribosomes in vitro. Probably functions indirectly by altering the affinity of the ribosome for aminoacyl-tRNA, thus increasing their reactivity as acceptors for peptidyl transferase. This is Elongation factor P from Borrelia garinii subsp. bavariensis (strain ATCC BAA-2496 / DSM 23469 / PBi) (Borreliella bavariensis).